The sequence spans 377 residues: Cyclin-I (377 aa).

The interval 356 to 377 is disordered; the sequence is TDLSRQEGHASPCPPLQPVSVM. Positions 367–377 are enriched in pro residues; the sequence is PCPPLQPVSVM.

This sequence belongs to the cyclin family.

The sequence is that of Cyclin-I (Ccni) from Mus musculus (Mouse).